Consider the following 155-residue polypeptide: SsrA-binding protein (155 aa).

Belongs to the SmpB family.

The protein localises to the cytoplasm. Required for rescue of stalled ribosomes mediated by trans-translation. Binds to transfer-messenger RNA (tmRNA), required for stable association of tmRNA with ribosomes. tmRNA and SmpB together mimic tRNA shape, replacing the anticodon stem-loop with SmpB. tmRNA is encoded by the ssrA gene; the 2 termini fold to resemble tRNA(Ala) and it encodes a 'tag peptide', a short internal open reading frame. During trans-translation Ala-aminoacylated tmRNA acts like a tRNA, entering the A-site of stalled ribosomes, displacing the stalled mRNA. The ribosome then switches to translate the ORF on the tmRNA; the nascent peptide is terminated with the 'tag peptide' encoded by the tmRNA and targeted for degradation. The ribosome is freed to recommence translation, which seems to be the essential function of trans-translation. This is SsrA-binding protein from Streptococcus sanguinis (strain SK36).